The primary structure comprises 116 residues: Nascent polypeptide-associated complex protein (116 aa).

Residues 6–70 (PKQMKDLERM…AREESKQQQK (65 aa)) enclose the NAC-A/B domain.

It belongs to the NAC-alpha family. In terms of assembly, homodimer. Interacts with the ribosome. Binds ribosomal RNA.

Contacts the emerging nascent chain on the ribosome. In Sulfolobus acidocaldarius (strain ATCC 33909 / DSM 639 / JCM 8929 / NBRC 15157 / NCIMB 11770), this protein is Nascent polypeptide-associated complex protein.